The primary structure comprises 407 residues: Serine/threonine transporter SstT (407 aa).

9 helical membrane-spanning segments follow: residues 14–34 (GSLV…ATVS), 48–68 (FVGA…AASI), 82–102 (IVIL…LMSF), 141–161 (AVIT…GLAL), 192–212 (IGIF…AIAG), 218–238 (LVLL…IVFF), 290–310 (IPLG…ILTL), 316–336 (MGIQ…GVSA), and 363–383 (VAMQ…SAET).

The protein belongs to the dicarboxylate/amino acid:cation symporter (DAACS) (TC 2.A.23) family.

The protein localises to the cell inner membrane. The enzyme catalyses L-serine(in) + Na(+)(in) = L-serine(out) + Na(+)(out). It catalyses the reaction L-threonine(in) + Na(+)(in) = L-threonine(out) + Na(+)(out). Its function is as follows. Involved in the import of serine and threonine into the cell, with the concomitant import of sodium (symport system). The sequence is that of Serine/threonine transporter SstT from Shewanella pealeana (strain ATCC 700345 / ANG-SQ1).